Reading from the N-terminus, the 169-residue chain is Peptide deformylase (169 aa).

Fe cation-binding residues include cysteine 91 and histidine 133. The active site involves glutamate 134. Histidine 137 serves as a coordination point for Fe cation.

Belongs to the polypeptide deformylase family. The cofactor is Fe(2+).

It carries out the reaction N-terminal N-formyl-L-methionyl-[peptide] + H2O = N-terminal L-methionyl-[peptide] + formate. Functionally, removes the formyl group from the N-terminal Met of newly synthesized proteins. Requires at least a dipeptide for an efficient rate of reaction. N-terminal L-methionine is a prerequisite for activity but the enzyme has broad specificity at other positions. The sequence is that of Peptide deformylase from Haemophilus influenzae (strain 86-028NP).